Here is a 983-residue protein sequence, read N- to C-terminus: Probable beta-galactosidase C (983 aa).

The signal sequence occupies residues 1–23 (MRIFSFLFLLLLGILTGQGLVSG). Tyr-82, Asn-127, Ala-128, Glu-129, and Asn-187 together coordinate substrate. Glu-188 functions as the Proton donor in the catalytic mechanism. The N-linked (GlcNAc...) asparagine glycan is linked to Asn-197. Tyr-251 provides a ligand contact to substrate. A disulfide bridge connects residues Cys-257 and Cys-304. Asn-276 is a glycosylation site (N-linked (GlcNAc...) asparagine). Glu-287 functions as the Nucleophile in the catalytic mechanism. Tyr-353 lines the substrate pocket. 10 N-linked (GlcNAc...) asparagine glycosylation sites follow: Asn-391, Asn-434, Asn-466, Asn-516, Asn-601, Asn-676, Asn-714, Asn-719, Asn-758, and Asn-804.

The protein belongs to the glycosyl hydrolase 35 family.

The protein resides in the secreted. The catalysed reaction is Hydrolysis of terminal non-reducing beta-D-galactose residues in beta-D-galactosides.. Cleaves beta-linked terminal galactosyl residues from gangliosides, glycoproteins, and glycosaminoglycans. This chain is Probable beta-galactosidase C (lacC), found in Aspergillus fumigatus (strain CBS 144.89 / FGSC A1163 / CEA10) (Neosartorya fumigata).